A 463-amino-acid chain; its full sequence is Cytoplasmic 60S subunit biogenesis factor SPCC550.15c (463 aa).

2 C2H2-type zinc fingers span residues 5 to 30 and 70 to 94; these read FACT…DWHH and QNCE…SKKH. The tract at residues 109-136 is disordered; it reads KLQSEDASSIASSTLSMGEPVVDSEIEE. The span at 113–124 shows a compositional bias: polar residues; sequence EDASSIASSTLS. Phosphoserine is present on residues S150 and S155. The segment at 155–189 is disordered; the sequence is SLHGRESEPSKTELATSIPQSNEASKSHLFTQEPT. A compositionally biased stretch (polar residues) spans 167 to 188; it reads ELATSIPQSNEASKSHLFTQEP. 2 consecutive C2H2-type zinc fingers follow at residues 208–231 and 259–283; these read RDCL…KASH and FTCL…QKGH. Residues 317–338 are compositionally biased toward acidic residues; that stretch reads TVVEEDGSSGEGDWEDVSDDSD. 2 disordered regions span residues 317–341 and 444–463; these read TVVE…DNSS and ANKM…ALLQ.

Belongs to the REI1 family. As to quaternary structure, associates with nascent pre-60S particles that have not yet entered the translating pool, and is released from mature 60S subunits.

The protein localises to the cytoplasm. Pre-60S-associated factor involved in the cytoplasmic maturation of the 60S subunit. Involved in the dissociation and recycling of other late pre-60S factors before newly synthesized large ribosomal subunits enter translation. This chain is Cytoplasmic 60S subunit biogenesis factor SPCC550.15c, found in Schizosaccharomyces pombe (strain 972 / ATCC 24843) (Fission yeast).